The sequence spans 249 residues: 3-deoxy-manno-octulosonate cytidylyltransferase (249 aa).

Belongs to the KdsB family.

It localises to the cytoplasm. The enzyme catalyses 3-deoxy-alpha-D-manno-oct-2-ulosonate + CTP = CMP-3-deoxy-beta-D-manno-octulosonate + diphosphate. It participates in nucleotide-sugar biosynthesis; CMP-3-deoxy-D-manno-octulosonate biosynthesis; CMP-3-deoxy-D-manno-octulosonate from 3-deoxy-D-manno-octulosonate and CTP: step 1/1. It functions in the pathway bacterial outer membrane biogenesis; lipopolysaccharide biosynthesis. Activates KDO (a required 8-carbon sugar) for incorporation into bacterial lipopolysaccharide in Gram-negative bacteria. This is 3-deoxy-manno-octulosonate cytidylyltransferase from Coxiella burnetii (strain CbuG_Q212) (Coxiella burnetii (strain Q212)).